We begin with the raw amino-acid sequence, 184 residues long: Lysozyme 1 (184 aa).

Residues 1–20 (MNGLILFCAVVFATAVCTYG) form the signal peptide. One can recognise an I-type lysozyme domain in the interval 69–184 (TGMVSQQCLR…WRRVQAQGCN (116 aa)). 6 disulfides stabilise this stretch: cysteine 76-cysteine 152, cysteine 81-cysteine 87, cysteine 92-cysteine 101, cysteine 114-cysteine 134, cysteine 124-cysteine 130, and cysteine 148-cysteine 166. The active-site Proton donor is the glutamate 84. Residue aspartate 95 is the Nucleophile of the active site. A substrate-binding site is contributed by 107–113 (KRAYWID). Substrate-binding positions include tyrosine 138 and 159-161 (HNG).

In terms of tissue distribution, hemolymph, labial palps, non-vesiculated cells of mantle connective tissue, cells of interlamellar junctions and epithelia surrounding the water tubes of the gills.

The protein localises to the secreted. The enzyme catalyses Hydrolysis of (1-&gt;4)-beta-linkages between N-acetylmuramic acid and N-acetyl-D-glucosamine residues in a peptidoglycan and between N-acetyl-D-glucosamine residues in chitodextrins.. Has antibacterial activity against the Gram-positive bacteria L.garvieae, M.luteus and Enterococcus sp., and the Gram-negative bacteria E.coli and V.vulnificus. Weak antibacterial activity against the Gram-negative bacterium A.hydrophila. No antibacterial activity detected against the Gram-positive bacterium S.iniae or against the Gram-negative bacterium E.ictaluri. Shows some chitinase activity but no isopeptidase activity. The protein is Lysozyme 1 of Crassostrea virginica (Eastern oyster).